The chain runs to 571 residues: Proline--tRNA ligase (571 aa).

It belongs to the class-II aminoacyl-tRNA synthetase family. ProS type 1 subfamily. Homodimer.

Its subcellular location is the cytoplasm. The enzyme catalyses tRNA(Pro) + L-proline + ATP = L-prolyl-tRNA(Pro) + AMP + diphosphate. Functionally, catalyzes the attachment of proline to tRNA(Pro) in a two-step reaction: proline is first activated by ATP to form Pro-AMP and then transferred to the acceptor end of tRNA(Pro). As ProRS can inadvertently accommodate and process non-cognate amino acids such as alanine and cysteine, to avoid such errors it has two additional distinct editing activities against alanine. One activity is designated as 'pretransfer' editing and involves the tRNA(Pro)-independent hydrolysis of activated Ala-AMP. The other activity is designated 'posttransfer' editing and involves deacylation of mischarged Ala-tRNA(Pro). The misacylated Cys-tRNA(Pro) is not edited by ProRS. The protein is Proline--tRNA ligase of Pseudomonas fluorescens (strain Pf0-1).